Reading from the N-terminus, the 295-residue chain is Ribosomal protein L11 methyltransferase (295 aa).

Positions 145, 166, 188, and 230 each coordinate S-adenosyl-L-methionine.

Belongs to the methyltransferase superfamily. PrmA family.

It localises to the cytoplasm. The enzyme catalyses L-lysyl-[protein] + 3 S-adenosyl-L-methionine = N(6),N(6),N(6)-trimethyl-L-lysyl-[protein] + 3 S-adenosyl-L-homocysteine + 3 H(+). Methylates ribosomal protein L11. This is Ribosomal protein L11 methyltransferase from Shewanella amazonensis (strain ATCC BAA-1098 / SB2B).